The following is a 515-amino-acid chain: N-acetylglucosamine-1-phosphodiester alpha-N-acetylglucosaminidase (515 aa).

The first 25 residues, 1–25 (MATSTGRWLLLRLALFGFLWEASGG), serve as a signal peptide directing secretion. A propeptide spans 26 to 49 (LDSGASRDDDLLLPYPRARARLPR) (removed in mature form). Over 50 to 448 (DCTRVRAGNR…AGELSFFTRT (399 aa)) the chain is Lumenal. 5 disulfide bridges follow: Cys-115/Cys-148, Cys-132/Cys-323, Cys-307/Cys-314, Cys-362/Cys-373, and Cys-380/Cys-389. Asn-208, Asn-214, and Asn-296 each carry an N-linked (GlcNAc...) asparagine glycan. Residues 358–390 (DELDCGPSNCSQHGLCTETGCRCDAGWTGSNCS) form the EGF-like domain. Asn-366, Asn-388, and Asn-420 each carry an N-linked (GlcNAc...) asparagine glycan. Residues 449–469 (AWLALTLALAFLLLISTAANL) traverse the membrane as a helical segment. Over 470–515 (SLLLSRAERNRRLHGDYAYHPLQEMNGEPLAAEKEQPGGAHNPFKD) the chain is Cytoplasmic. Positions 486–493 (YAYHPLQE) are mediates the interaction with AP4M1. The Tyrosine-based internalization motif signature appears at 488-491 (YHPL). Residues 511–515 (NPFKD) carry the NPF internalization motif motif.

In terms of assembly, homotetramer arranged as two disulfide-linked homodimers. Interacts with AP4M1. The precursor is cleaved and activated in the trans-Golgi network by a furin endopeptidase. Isoform 2 may be brain-specific.

The protein localises to the golgi apparatus. Its subcellular location is the golgi stack membrane. It localises to the trans-Golgi network. It catalyses the reaction N(4)-[6-(N-acetyl-alpha-D-glucosaminyl-1-phospho)-alpha-D-mannosyl-(1-&gt;2)-alpha-D-mannosyl-(glycan)]-L-asparaginyl-[protein] + H2O = N(4)-[6-phospho-alpha-D-mannosyl-(1-&gt;2)-alpha-D-mannosyl-(glycan)]-L-asparaginyl-[protein] + N-acetyl-D-glucosamine + H(+). It participates in protein modification; protein glycosylation. Catalyzes the second step in the formation of the mannose 6-phosphate targeting signal on lysosomal enzyme oligosaccharides by removing GlcNAc residues from GlcNAc-alpha-P-mannose moieties, which are formed in the first step. Also hydrolyzes UDP-GlcNAc, a sugar donor for Golgi N-acetylglucosaminyltransferases. The protein is N-acetylglucosamine-1-phosphodiester alpha-N-acetylglucosaminidase (NAGPA) of Homo sapiens (Human).